We begin with the raw amino-acid sequence, 98 residues long: Flagellar hook-basal body complex protein FliE (98 aa).

The protein belongs to the FliE family.

Its subcellular location is the bacterial flagellum basal body. In Listeria monocytogenes serovar 1/2a (strain ATCC BAA-679 / EGD-e), this protein is Flagellar hook-basal body complex protein FliE.